Here is a 428-residue protein sequence, read N- to C-terminus: Glutamate-1-semialdehyde 2,1-aminomutase 2 (428 aa).

K267 is subject to N6-(pyridoxal phosphate)lysine.

It belongs to the class-III pyridoxal-phosphate-dependent aminotransferase family. HemL subfamily. In terms of assembly, homodimer. It depends on pyridoxal 5'-phosphate as a cofactor.

The protein localises to the cytoplasm. The catalysed reaction is (S)-4-amino-5-oxopentanoate = 5-aminolevulinate. It participates in porphyrin-containing compound metabolism; protoporphyrin-IX biosynthesis; 5-aminolevulinate from L-glutamyl-tRNA(Glu): step 2/2. This Oceanobacillus iheyensis (strain DSM 14371 / CIP 107618 / JCM 11309 / KCTC 3954 / HTE831) protein is Glutamate-1-semialdehyde 2,1-aminomutase 2.